A 303-amino-acid polypeptide reads, in one-letter code: Elongation factor Ts (303 aa).

The segment at 80-83 (TDFV) is involved in Mg(2+) ion dislocation from EF-Tu.

It belongs to the EF-Ts family.

Its subcellular location is the cytoplasm. Associates with the EF-Tu.GDP complex and induces the exchange of GDP to GTP. It remains bound to the aminoacyl-tRNA.EF-Tu.GTP complex up to the GTP hydrolysis stage on the ribosome. This chain is Elongation factor Ts, found in Clostridium botulinum (strain Alaska E43 / Type E3).